Reading from the N-terminus, the 111-residue chain is MFGGKGGMGNLMKQAQQMQDRMQKMQEEIANMEVTGESGAGLVKVTITGSHSVRRVEIDPSLMEEDEKEMLEDLIAAAFNDASRRIEETQKEKMASVTGGMQMPPGFKMPF.

2 disordered regions span residues 1 to 23 (MFGG…DRMQ) and 89 to 111 (TQKE…KMPF).

The protein belongs to the YbaB/EbfC family. Homodimer.

The protein localises to the cytoplasm. The protein resides in the nucleoid. Binds to DNA and alters its conformation. May be involved in regulation of gene expression, nucleoid organization and DNA protection. The sequence is that of Nucleoid-associated protein VF_1686 from Aliivibrio fischeri (strain ATCC 700601 / ES114) (Vibrio fischeri).